A 518-amino-acid polypeptide reads, in one-letter code: Gypsy retrotransposon integrase-like protein 1 (518 aa).

The region spanning 130–292 (QQHLPMVGNP…TPYFQMFNRN (163 aa)) is the Integrase catalytic domain. S498 bears the Phosphoserine mark.

In Mus musculus (Mouse), this protein is Gypsy retrotransposon integrase-like protein 1 (Gin1).